The primary structure comprises 572 residues: Dihydroxy-acid dehydratase (572 aa).

Cys57 provides a ligand contact to [2Fe-2S] cluster. Asp89 lines the Mg(2+) pocket. Cys130 lines the [2Fe-2S] cluster pocket. 2 residues coordinate Mg(2+): Asp131 and Lys132. An N6-carboxylysine modification is found at Lys132. [2Fe-2S] cluster is bound at residue Cys202. Glu453 is a Mg(2+) binding site. Ser479 serves as the catalytic Proton acceptor.

The protein belongs to the IlvD/Edd family. In terms of assembly, homodimer. Requires [2Fe-2S] cluster as cofactor. Mg(2+) is required as a cofactor.

It catalyses the reaction (2R)-2,3-dihydroxy-3-methylbutanoate = 3-methyl-2-oxobutanoate + H2O. The catalysed reaction is (2R,3R)-2,3-dihydroxy-3-methylpentanoate = (S)-3-methyl-2-oxopentanoate + H2O. It functions in the pathway amino-acid biosynthesis; L-isoleucine biosynthesis; L-isoleucine from 2-oxobutanoate: step 3/4. Its pathway is amino-acid biosynthesis; L-valine biosynthesis; L-valine from pyruvate: step 3/4. Functionally, functions in the biosynthesis of branched-chain amino acids. Catalyzes the dehydration of (2R,3R)-2,3-dihydroxy-3-methylpentanoate (2,3-dihydroxy-3-methylvalerate) into 2-oxo-3-methylpentanoate (2-oxo-3-methylvalerate) and of (2R)-2,3-dihydroxy-3-methylbutanoate (2,3-dihydroxyisovalerate) into 2-oxo-3-methylbutanoate (2-oxoisovalerate), the penultimate precursor to L-isoleucine and L-valine, respectively. The sequence is that of Dihydroxy-acid dehydratase from Streptococcus sanguinis (strain SK36).